Consider the following 274-residue polypeptide: Enoyl-CoA isomerase/hydratase fer4 (274 aa).

Substrate contacts are provided by residues 77-81 (AGADL) and Gly-124. The stretch at 79-109 (ADLKERREMSEAEVIEFLQDLRHMLEQVEKL) forms a coiled coil.

It belongs to the enoyl-CoA hydratase/isomerase family.

The catalysed reaction is a (3S)-3-hydroxyacyl-CoA = a (2E)-enoyl-CoA + H2O. It catalyses the reaction a 4-saturated-(3S)-3-hydroxyacyl-CoA = a (3E)-enoyl-CoA + H2O. Its pathway is siderophore biosynthesis. In terms of biological role, enoyl-CoA isomerase/hydratase; part of the gene cluster that mediates the biosynthesis of siderophore ferrichrome A which is contributing to organismal virulence. The first step of ferrichrome A biosynthesis is performed by the HMG-CoA synthase hcs1 which catalyzes the generation of HMG-CoA and CoA using acetoacetyl-CoA and acetyl-CoA as substrates. The enoyl-CoA isomerase/hydratase fer4 then catalyzes the conversion of hcs1-produced HMG-CoA to methylglutaconyl-CoA. The acyltransferase fer5 then fuses the fer4-generated methylglutaconyl-CoA with sid1-generated hydroxyornithine to yield methylglutaconyl hydroxyornithine. Methylglutaconyl hydroxyornithine is then available for use by the NRPS fer3 to generate ferrichrome A. The polypeptide is Enoyl-CoA isomerase/hydratase fer4 (Mycosarcoma maydis (Corn smut fungus)).